Reading from the N-terminus, the 468-residue chain is UDP-N-acetylmuramate--L-alanine ligase (468 aa).

117–123 (GTHGKTT) provides a ligand contact to ATP.

This sequence belongs to the MurCDEF family.

It localises to the cytoplasm. It carries out the reaction UDP-N-acetyl-alpha-D-muramate + L-alanine + ATP = UDP-N-acetyl-alpha-D-muramoyl-L-alanine + ADP + phosphate + H(+). It participates in cell wall biogenesis; peptidoglycan biosynthesis. In terms of biological role, cell wall formation. This is UDP-N-acetylmuramate--L-alanine ligase from Maricaulis maris (strain MCS10) (Caulobacter maris).